Consider the following 184-residue polypeptide: NADH-quinone oxidoreductase subunit B (184 aa).

[4Fe-4S] cluster contacts are provided by Cys-37, Cys-38, Cys-103, and Cys-132.

Belongs to the complex I 20 kDa subunit family. As to quaternary structure, NDH-1 is composed of 14 different subunits. Subunits NuoB, C, D, E, F, and G constitute the peripheral sector of the complex. The cofactor is [4Fe-4S] cluster.

It is found in the cell membrane. The catalysed reaction is a quinone + NADH + 5 H(+)(in) = a quinol + NAD(+) + 4 H(+)(out). Its function is as follows. NDH-1 shuttles electrons from NADH, via FMN and iron-sulfur (Fe-S) centers, to quinones in the respiratory chain. The immediate electron acceptor for the enzyme in this species is believed to be a menaquinone. Couples the redox reaction to proton translocation (for every two electrons transferred, four hydrogen ions are translocated across the cytoplasmic membrane), and thus conserves the redox energy in a proton gradient. The chain is NADH-quinone oxidoreductase subunit B from Mycobacterium sp. (strain JLS).